The primary structure comprises 578 residues: L-2,3-diaminopropanoate--citrate ligase (578 aa).

This sequence belongs to the IucA/IucC family. As to quaternary structure, forms a mixture of monomer and dimer in solution.

The catalysed reaction is (S)-2,3-diaminopropanoate + citrate + ATP = 2-[(L-alanin-3-ylcarbamoyl)methyl]-2-hydroxybutanedioate + AMP + diphosphate. The protein operates within siderophore biosynthesis. In terms of biological role, catalyzes the synthesis of citryl-L-2,3-diaminopropionic acid from L-2,3-diaminopropionic acid (L-Dap) and citrate, the first step in staphyloferrin B biosynthesis. The sequence is that of L-2,3-diaminopropanoate--citrate ligase from Staphylococcus aureus (strain NCTC 8325 / PS 47).